A 490-amino-acid chain; its full sequence is MDPVVVLVLCLSCLLLLSLWKQSHGGGKLPPGPTPLPILGNILQIDFKDISKSLQNLSKVYGNVFTVYMGMKPTVVMYGYEAVKEALVDLGEEFSGRNLSPINKKVNKGLGVIFSNGKRWKEIRRFSLMTLRNFGMGKRSIEDRVQEEARCLVEELRKTNGSPCDPTFILGAAPCNVICSVIFQNRFDYKDETFLNLMGKFNENFRILNSPWLQVCNIFPILMDYLPGTHKTVFENFDYVRNFVLEKTKEHQESLDINNPRDFIDCFLIKMKQEKHNQQSEFTIENLMATVTDVFAAGTETTSTTLRYGLLLLMKHPEVTAKVQEEIERVIGRHRSPCMQDRSRMPYTDATVHEIQRYINLVPNNVPHATTCNVKFRNYFIPKGTAVLTSLTSVLHDNQEFLKPDKFDPGHFLDASGNFKKSDYFMPFSTGKRVCMGEALARMELFLFLTAILQNFTLKPLVDPKDIDTTPLVSGARSCATLYQLSFIPA.

Cys-435 lines the heme pocket.

This sequence belongs to the cytochrome P450 family. It depends on heme as a cofactor.

Its subcellular location is the endoplasmic reticulum membrane. It is found in the microsome membrane. The catalysed reaction is an organic molecule + reduced [NADPH--hemoprotein reductase] + O2 = an alcohol + oxidized [NADPH--hemoprotein reductase] + H2O + H(+). Its function is as follows. Cytochromes P450 are a group of heme-thiolate monooxygenases. In liver microsomes, this enzyme is involved in an NADPH-dependent electron transport pathway. It oxidizes a variety of structurally unrelated compounds, including steroids, fatty acids, and xenobiotics. The sequence is that of Cytochrome P450 2C14 (CYP2C14) from Oryctolagus cuniculus (Rabbit).